The chain runs to 325 residues: L-lactate dehydrogenase (325 aa).

NAD(+) is bound by residues valine 19, aspartate 40, lysine 45, tyrosine 70, and glycine 84–alanine 85. Positions 87 and 93 each coordinate substrate. NAD(+) is bound by residues threonine 106, alanine 123–asparagine 125, and serine 148. Asparagine 125–aspartate 128 provides a ligand contact to substrate. Aspartate 153–arginine 156 lines the substrate pocket. Beta-D-fructose 1,6-bisphosphate-binding residues include arginine 158 and histidine 173. The active-site Proton acceptor is the histidine 180. Phosphotyrosine is present on tyrosine 225. Threonine 234 provides a ligand contact to substrate.

Belongs to the LDH/MDH superfamily. LDH family. In terms of assembly, homotetramer.

Its subcellular location is the cytoplasm. The catalysed reaction is (S)-lactate + NAD(+) = pyruvate + NADH + H(+). It participates in fermentation; pyruvate fermentation to lactate; (S)-lactate from pyruvate: step 1/1. Its activity is regulated as follows. Allosterically activated by fructose 1,6-bisphosphate (FBP). Catalyzes the conversion of lactate to pyruvate. This is L-lactate dehydrogenase from Latilactobacillus sakei (Lactobacillus sakei).